The primary structure comprises 232 residues: 2,3,4,5-tetrahydropyridine-2,6-dicarboxylate N-acetyltransferase (232 aa).

The protein belongs to the transferase hexapeptide repeat family. DapH subfamily.

It catalyses the reaction (S)-2,3,4,5-tetrahydrodipicolinate + acetyl-CoA + H2O = L-2-acetamido-6-oxoheptanedioate + CoA. Its pathway is amino-acid biosynthesis; L-lysine biosynthesis via DAP pathway; LL-2,6-diaminopimelate from (S)-tetrahydrodipicolinate (acetylase route): step 1/3. Its function is as follows. Catalyzes the transfer of an acetyl group from acetyl-CoA to tetrahydrodipicolinate. This chain is 2,3,4,5-tetrahydropyridine-2,6-dicarboxylate N-acetyltransferase, found in Streptococcus pneumoniae serotype 4 (strain ATCC BAA-334 / TIGR4).